A 707-amino-acid polypeptide reads, in one-letter code: Drebrin (707 aa).

At Ala-2 the chain carries N-acetylalanine. Positions 3–134 (GVSFSGHRLE…DAGAIGQRLS (132 aa)) constitute an ADF-H domain. 2 positions are modified to phosphoserine: Ser-141 and Ser-142. Residues 209–236 (ERMEQERQEQEERERRYREREQQIEEHR) are compositionally biased toward basic and acidic residues. 5 disordered regions span residues 209 to 438 (ERME…VCKE), 452 to 497 (AEEP…TSVA), 531 to 557 (WPGN…AEAS), 582 to 609 (LLNF…PLAA), and 630 to 707 (LEPE…EGGD). Phosphoserine is present on Ser-241. Basic and acidic residues predominate over residues 288-298 (DNPREFFRQQE). Low complexity predominate over residues 329-343 (SDSGPSSSSSSSSSP). Position 342 is a phosphoserine (Ser-342). Polar residues predominate over residues 355–364 (RTPNLSSSLP). Residues Thr-377 and Thr-381 each carry the phosphothreonine modification. The span at 380–395 (PTRSPSDSSTASTPIT) shows a compositional bias: polar residues. Phosphoserine is present on residues Ser-383, Ser-385, and Ser-391. At Thr-392 the chain carries Phosphothreonine. Pro residues predominate over residues 409–420 (QPPPPPPPPPPA). Positions 428 to 438 (PRLDGEEVCKE) are enriched in basic and acidic residues. Ser-467 is modified (phosphoserine). Thr-549 carries the post-translational modification Phosphothreonine. A compositionally biased stretch (polar residues) spans 639–652 (NGETTQKEGTQQAS). At Ser-659 the chain carries Phosphoserine. A compositionally biased stretch (acidic residues) spans 695–707 (PVPEEEEGFEGGD).

In terms of assembly, interacts with RUFY. Interacts with CXCR4; this interaction is enhanced by antigenic stimulation. Interacts (via ADF-H domain) with ZMYND8 (via N-terminus); the interaction leads to sequestering of ZMYND8 in the cytoplasm. Post-translationally, ISGylated. As to expression, brain neurons.

The protein localises to the cytoplasm. The protein resides in the cell projection. It is found in the dendrite. Its subcellular location is the cell cortex. It localises to the cell junction. The protein localises to the growth cone. Its function is as follows. Actin cytoskeleton-organizing protein that plays a role in the formation of cell projections. Required for actin polymerization at immunological synapses (IS) and for the recruitment of the chemokine receptor CXCR4 to IS. Plays a role in dendritic spine morphogenesis and organization, including the localization of the dopamine receptor DRD1 to the dendritic spines. Involved in memory-related synaptic plasticity in the hippocampus. The chain is Drebrin (Dbn1) from Rattus norvegicus (Rat).